Reading from the N-terminus, the 499-residue chain is Cysteine--tRNA ligase (499 aa).

C30 is a Zn(2+) binding site. The short motif at 32 to 42 (PTVYDRAHLGN) is the 'HIGH' region element. C221, H246, and E250 together coordinate Zn(2+). A 'KMSKS' region motif is present at residues 279–283 (KMSKS). K282 lines the ATP pocket.

The protein belongs to the class-I aminoacyl-tRNA synthetase family. As to quaternary structure, monomer. Requires Zn(2+) as cofactor.

It is found in the cytoplasm. It carries out the reaction tRNA(Cys) + L-cysteine + ATP = L-cysteinyl-tRNA(Cys) + AMP + diphosphate. The sequence is that of Cysteine--tRNA ligase from Cereibacter sphaeroides (strain ATCC 17023 / DSM 158 / JCM 6121 / CCUG 31486 / LMG 2827 / NBRC 12203 / NCIMB 8253 / ATH 2.4.1.) (Rhodobacter sphaeroides).